The sequence spans 621 residues: SH2B adapter protein 2 (621 aa).

Tyr47 carries the post-translational modification Phosphotyrosine. Position 130 is a phosphoserine (Ser130). Positions 144–165 (RASPEPEGGATPKTTEPVSEPR) are disordered. The 114-residue stretch at 186–299 (DIQREGALRF…WVADIQGCVD (114 aa)) folds into the PH domain. Position 303 is a phosphoserine (Ser303). An SH2 domain is found at 409 to 507 (WFHGTLSRVK…SADITLRSYV (99 aa)). 2 disordered regions span residues 507 to 528 (VRAQ…PVPA) and 548 to 609 (PPTS…ATLG). A compositionally biased stretch (low complexity) spans 552-570 (PSNGAGASSSSGSSSSATS). Residue Ser597 is modified to Phosphoserine. The residue at position 618 (Tyr618) is a Phosphotyrosine.

The protein belongs to the SH2B adapter family. As to quaternary structure, homodimer. Interacts with KIT/c-KIT, SHC1, EPOR, PDGFR, VAV1 and VAV3. Interacts (via N-terminal region) with SHC1. Interacts (via the phosphorylated C-terminus) with GRB2. Interacts (via its SH2 domain) with EPOR, INSR and KIT. Interacts with GRB2 after B-cell antigen receptor stimulation. Interacts (via PH domain) with VAV3. Interacts with NTRK1, NTRK2 and NTRK3 (phosphorylated); after stimulation of the receptor by its extracellular ligand and subsequent autophosphorylation of the receptor. Binds INSR, GRB2, ASB6 and CAP. Insulin stimulation leads to dissociation of CAP. Binds CBS only when SH2B2/APS has become phosphorylated. INSR binding does not depend on the phosphorylation of SH2B2/APS. Post-translationally, phosphorylated on a tyrosine residue by NTRK1, NTRK2, NTRK3 and INSR after stimulation of the receptor by its extracellular ligand. Tyrosine phosphorylated by JAK2, KIT and other kinases activated by B-cell receptor in response to stimulation with cytokines, IL3, IL5, PDGF, IGF1, IGF2, CSF2/GM-CSF and cross-linking of the B-cell receptor complex. As to expression, detected in embryonic brain, spinal cord and cortical neurons.

Its subcellular location is the cytoplasm. It localises to the membrane. Its function is as follows. Adapter protein for several members of the tyrosine kinase receptor family. Involved in multiple signaling pathways. Binds to EPOR and suppresses EPO-induced STAT5 activation, possibly through a masking effect on STAT5 docking sites in EPOR. Suppresses PDGF-induced mitogenesis. Involved in stimulation of glucose uptake by insulin. Involved in coupling from immunoreceptor to Ras signaling. Acts as a negative regulator of cytokine signaling in collaboration with CBL. Induces cytoskeletal reorganization and neurite outgrowth in cultured neurons. In Rattus norvegicus (Rat), this protein is SH2B adapter protein 2 (Sh2b2).